A 139-amino-acid polypeptide reads, in one-letter code: Small ribosomal subunit protein uS19 (139 aa).

This sequence belongs to the universal ribosomal protein uS19 family.

Protein S19 forms a complex with S13 that binds strongly to the 16S ribosomal RNA. In Ignicoccus hospitalis (strain KIN4/I / DSM 18386 / JCM 14125), this protein is Small ribosomal subunit protein uS19.